The following is a 234-amino-acid chain: Purine nucleoside phosphorylase DeoD-type (234 aa).

His-4 lines the a purine D-ribonucleoside pocket. Phosphate is bound by residues Gly-20, Arg-24, Arg-43, and 87-90 (RIGS). Residues Glu-162, 179–181 (EME), and 203–204 (SD) contribute to the a purine D-ribonucleoside site. Residue Asp-204 is the Proton donor of the active site.

The protein belongs to the PNP/UDP phosphorylase family. In terms of assembly, homohexamer; trimer of homodimers.

The enzyme catalyses a purine D-ribonucleoside + phosphate = a purine nucleobase + alpha-D-ribose 1-phosphate. It catalyses the reaction a purine 2'-deoxy-D-ribonucleoside + phosphate = a purine nucleobase + 2-deoxy-alpha-D-ribose 1-phosphate. Functionally, catalyzes the reversible phosphorolytic breakdown of the N-glycosidic bond in the beta-(deoxy)ribonucleoside molecules, with the formation of the corresponding free purine bases and pentose-1-phosphate. The polypeptide is Purine nucleoside phosphorylase DeoD-type (Jannaschia sp. (strain CCS1)).